The following is a 124-amino-acid chain: ATP synthase subunit H, mitochondrial (124 aa).

The transit peptide at 1 to 32 (MFPIASRRILLNASVLPLRLCNRNFTTTRISY) directs the protein to the mitochondrion. Residues 89–124 (NVETAHVAKESEEGESEPIEEDWLVLDDAEETKESH) are disordered. Acidic residues predominate over residues 100–124 (EEGESEPIEEDWLVLDDAEETKESH).

It belongs to the ATPase h subunit family. As to quaternary structure, F-type ATPases have 2 components, CF(1) - the catalytic core - and CF(0) - the membrane proton channel. In yeast, the dimeric form of ATP synthase consists of 17 polypeptides: alpha, beta, gamma, delta, epsilon, 4 (B), 5 (OSCP), 6 (A), 8, 9 (C), d, E (Tim11), f, g, h, i/j and k.

Its subcellular location is the mitochondrion. It is found in the mitochondrion inner membrane. Its function is as follows. Mitochondrial membrane ATP synthase (F(1)F(0) ATP synthase or Complex V) produces ATP from ADP in the presence of a proton gradient across the membrane which is generated by electron transport complexes of the respiratory chain. F-type ATPases consist of two structural domains, F(1) - containing the extramembraneous catalytic core and F(0) - containing the membrane proton channel, linked together by a central stalk and a peripheral stalk. During catalysis, ATP synthesis in the catalytic domain of F(1) is coupled via a rotary mechanism of the central stalk subunits to proton translocation. Part of the complex F(0) domain. Minor subunit located with subunit a in the membrane. The polypeptide is ATP synthase subunit H, mitochondrial (ATP14) (Saccharomyces cerevisiae (strain ATCC 204508 / S288c) (Baker's yeast)).